Here is a 341-residue protein sequence, read N- to C-terminus: L-threonine 3-dehydrogenase (341 aa).

Cys38 serves as a coordination point for Zn(2+). Active-site charge relay system residues include Thr40 and His43. Zn(2+) is bound by residues His63, Glu64, Cys93, Cys96, Cys99, and Cys107. Residues Ile175, Asp195, Arg200, 262–264, and 286–287 each bind NAD(+); these read LGI and IY.

It belongs to the zinc-containing alcohol dehydrogenase family. In terms of assembly, homotetramer. Requires Zn(2+) as cofactor.

Its subcellular location is the cytoplasm. It carries out the reaction L-threonine + NAD(+) = (2S)-2-amino-3-oxobutanoate + NADH + H(+). Its pathway is amino-acid degradation; L-threonine degradation via oxydo-reductase pathway; glycine from L-threonine: step 1/2. Functionally, catalyzes the NAD(+)-dependent oxidation of L-threonine to 2-amino-3-ketobutyrate. The polypeptide is L-threonine 3-dehydrogenase (Yersinia pseudotuberculosis serotype O:1b (strain IP 31758)).